We begin with the raw amino-acid sequence, 88 residues long: HssA/B-like protein 9 (88 aa).

The segment covering 1 to 14 has biased composition (polar residues); sequence MSILSALTSISNPM. A disordered region spans residues 1-26; that stretch reads MSILSALTSISNPMKSSKSSVANGGG.

Belongs to the hssA/B family.

The polypeptide is HssA/B-like protein 9 (hssl9) (Dictyostelium discoideum (Social amoeba)).